An 89-amino-acid polypeptide reads, in one-letter code: MSLNAETKAAIVAEYAQCENDTGSPEVQVALLTAQINHLQGHFANHKHDHHSRRGLLRMVSRRRKLLDYLKGKNLDRYQDLIKRQGLRR.

Belongs to the universal ribosomal protein uS15 family. Part of the 30S ribosomal subunit. Forms a bridge to the 50S subunit in the 70S ribosome, contacting the 23S rRNA.

In terms of biological role, one of the primary rRNA binding proteins, it binds directly to 16S rRNA where it helps nucleate assembly of the platform of the 30S subunit by binding and bridging several RNA helices of the 16S rRNA. Forms an intersubunit bridge (bridge B4) with the 23S rRNA of the 50S subunit in the ribosome. This Photobacterium profundum (strain SS9) protein is Small ribosomal subunit protein uS15.